Here is a 189-residue protein sequence, read N- to C-terminus: ATP-dependent protease subunit HslV (189 aa).

The active site involves Thr12. Na(+) contacts are provided by Ala172, Cys175, and Thr178.

The protein belongs to the peptidase T1B family. HslV subfamily. In terms of assembly, a double ring-shaped homohexamer of HslV is capped on each side by a ring-shaped HslU homohexamer. The assembly of the HslU/HslV complex is dependent on binding of ATP.

It localises to the cytoplasm. It carries out the reaction ATP-dependent cleavage of peptide bonds with broad specificity.. Its activity is regulated as follows. Allosterically activated by HslU binding. Its function is as follows. Protease subunit of a proteasome-like degradation complex believed to be a general protein degrading machinery. The protein is ATP-dependent protease subunit HslV of Ehrlichia ruminantium (strain Welgevonden).